Reading from the N-terminus, the 151-residue chain is Ubiquitin-conjugating enzyme E2 2 (151 aa).

A UBC core domain is found at 4–150 (AARRRLMRDF…VRETVEKSWE (147 aa)). Cys88 (glycyl thioester intermediate) is an active-site residue.

It belongs to the ubiquitin-conjugating enzyme family.

The protein localises to the cytoplasm. It localises to the nucleus. It carries out the reaction S-ubiquitinyl-[E1 ubiquitin-activating enzyme]-L-cysteine + [E2 ubiquitin-conjugating enzyme]-L-cysteine = [E1 ubiquitin-activating enzyme]-L-cysteine + S-ubiquitinyl-[E2 ubiquitin-conjugating enzyme]-L-cysteine.. It participates in protein modification; protein ubiquitination. Its function is as follows. Catalyzes the covalent attachment of ubiquitin to other proteins. Plays a role in transcription regulation by catalyzing the monoubiquitination of histone H2B to form H2BK123ub1. H2BK123ub1 gives a specific tag for epigenetic transcriptional activation and is also a prerequisite for H3K4me and H3K79me formation. Also involved in postreplication repair of UV-damaged DNA, in N-end rule-dependent protein degradation and in sporulation. The protein is Ubiquitin-conjugating enzyme E2 2 (mus-8) of Neurospora crassa (strain ATCC 24698 / 74-OR23-1A / CBS 708.71 / DSM 1257 / FGSC 987).